Consider the following 101-residue polypeptide: NAD(P)H-quinone oxidoreductase subunit 4L, chloroplastic (101 aa).

The next 3 membrane-spanning stretches (helical) occupy residues 2-22 (MFEH…YGLI), 32-52 (ICLE…SDLF), and 61-81 (IFAI…LSIL).

It belongs to the complex I subunit 4L family. NDH is composed of at least 16 different subunits, 5 of which are encoded in the nucleus.

The protein resides in the plastid. The protein localises to the chloroplast thylakoid membrane. The enzyme catalyses a plastoquinone + NADH + (n+1) H(+)(in) = a plastoquinol + NAD(+) + n H(+)(out). It catalyses the reaction a plastoquinone + NADPH + (n+1) H(+)(in) = a plastoquinol + NADP(+) + n H(+)(out). NDH shuttles electrons from NAD(P)H:plastoquinone, via FMN and iron-sulfur (Fe-S) centers, to quinones in the photosynthetic chain and possibly in a chloroplast respiratory chain. The immediate electron acceptor for the enzyme in this species is believed to be plastoquinone. Couples the redox reaction to proton translocation, and thus conserves the redox energy in a proton gradient. The sequence is that of NAD(P)H-quinone oxidoreductase subunit 4L, chloroplastic from Oryza nivara (Indian wild rice).